A 25-amino-acid polypeptide reads, in one-letter code: Small ribosomal subunit protein eS32 (25 aa).

The tract at residues 1–25 is disordered; sequence MRAKWRKKRVRRLKRKRRKVRARSK.

It belongs to the eukaryotic ribosomal protein eS32 family. In terms of assembly, component of the small ribosomal subunit.

The polypeptide is Small ribosomal subunit protein eS32 (RPL41) (Eremothecium gossypii (strain ATCC 10895 / CBS 109.51 / FGSC 9923 / NRRL Y-1056) (Yeast)).